Here is a 505-residue protein sequence, read N- to C-terminus: Transcription factor APG (505 aa).

7 disordered regions span residues 1–40, 61–99, 119–156, 169–242, 256–312, 324–344, and 469–505; these read MLRGNDTGSDLAELLWDNGAPAPLRPPPPPPFQPFTCSAA, GAANHHHHDDDDDDDDDVPWLHYHPVVDDDDDADADTAP, PAAAASRVDPDPCSSSHGAVVPSTSAAAAKQARTSGGG, PLQQ…APTT, AQRL…SQDE, RRSAARSSKRSRTAEVHNLSE, and PPPPPPPFPHAAATAVEQTPSPPGAADAGNAPAVKQA. Positions 23-33 are enriched in pro residues; the sequence is PLRPPPPPPFQ. A compositionally biased stretch (polar residues) spans 131 to 144; it reads CSSSHGAVVPSTSA. Low complexity predominate over residues 174 to 199; it reads PSGGETASASASAAATSTVPVESTVV. Residues 200–212 show a composition bias toward polar residues; it reads QAATNRLRSTPLF. Pro residues predominate over residues 222-239; sequence PPKPSPRAAAPPPPPPLA. A compositionally biased stretch (basic and acidic residues) spans 288–299; sequence GDRRQLNWRDSH. Positions 300 to 310 are enriched in polar residues; that stretch reads NNQSAEWSASQ. Basic residues predominate over residues 324–334; the sequence is RRSAARSSKRS. Residues 335-344 show a composition bias toward basic and acidic residues; it reads RTAEVHNLSE. In terms of domain architecture, bHLH spans 335-384; that stretch reads RTAEVHNLSERRRRDRINEKMRALQELIPNCNKIDKASMLEEAIEYLKTL. Over residues 492-505 the composition is skewed to low complexity; the sequence is GAADAGNAPAVKQA.

Belongs to the bHLH protein family. Homodimer and heterodimer with ILI5 or ILI6.

It localises to the nucleus. Functionally, atypical bHLH transcription factor that acts as a negative regulator of grain size. Binds the transcription factor ILI6 and forms a heterodimer of antagonistic bHLH transcription factors that regulates grain length and weight by controlling cell elongation in lemma and palea. May be involved in the control of lamina inclination through brassinosteroid signaling pathway. The chain is Transcription factor APG (APG) from Oryza sativa subsp. japonica (Rice).